The chain runs to 175 residues: Small ribosomal subunit protein uS9 (175 aa).

Belongs to the universal ribosomal protein uS9 family.

This is Small ribosomal subunit protein uS9 from Streptomyces griseus subsp. griseus (strain JCM 4626 / CBS 651.72 / NBRC 13350 / KCC S-0626 / ISP 5235).